The chain runs to 426 residues: Growth-regulating factor 9 (426 aa).

In terms of domain architecture, QLQ spans Pro92–Lys127. Residues Asp151–Asn195 enclose the WRC domain. Short sequence motifs (bipartite nuclear localization signal) lie at residues Arg156–Arg166 and Arg184–Lys191. Positions Arg184–Ala222 are disordered. A compositionally biased stretch (basic and acidic residues) spans Lys191–Lys202.

The protein belongs to the GRF family.

Its subcellular location is the nucleus. In terms of biological role, transcription activator that plays a regulatory role in gibberellin-induced stem elongation. The polypeptide is Growth-regulating factor 9 (GRF9) (Oryza sativa subsp. japonica (Rice)).